Here is a 351-residue protein sequence, read N- to C-terminus: Nicotinate-nucleotide--dimethylbenzimidazole phosphoribosyltransferase (351 aa).

Residue Glu-317 is the Proton acceptor of the active site.

Belongs to the CobT family.

It catalyses the reaction 5,6-dimethylbenzimidazole + nicotinate beta-D-ribonucleotide = alpha-ribazole 5'-phosphate + nicotinate + H(+). It functions in the pathway nucleoside biosynthesis; alpha-ribazole biosynthesis; alpha-ribazole from 5,6-dimethylbenzimidazole: step 1/2. Functionally, catalyzes the synthesis of alpha-ribazole-5'-phosphate from nicotinate mononucleotide (NAMN) and 5,6-dimethylbenzimidazole (DMB). The chain is Nicotinate-nucleotide--dimethylbenzimidazole phosphoribosyltransferase from Pseudomonas putida (strain W619).